The sequence spans 521 residues: Cytochrome P450 monooxygenase sdnF (521 aa).

The chain crosses the membrane as a helical span at residues 19–39 (YLGLLLSGTVLYTVYKLIIAI). Asn178, Asn186, Asn191, Asn309, and Asn416 each carry an N-linked (GlcNAc...) asparagine glycan. Residue Cys460 participates in heme binding.

It belongs to the cytochrome P450 family. The cofactor is heme.

The protein localises to the membrane. It participates in antibiotic biosynthesis. Cytochrome P450 monooxygenase; part of the gene cluster that mediates the biosynthesis of sordarin and hypoxysordarin, glycoside antibiotics with a unique tetracyclic diterpene aglycone structure. First, the geranylgeranyl diphosphate synthase sdnC constructs GGDP from farnesyl diphosphate and isopentenyl diphosphate. The diterpene cyclase sdnA then catalyzes the cyclization of GGDP to afford cycloaraneosene. Cycloaraneosene is then hydroxylated four times by the putative cytochrome P450 monooxygenases sdnB, sdnE, sdnF and sdnH to give a hydroxylated cycloaraneosene derivative such as cycloaraneosene-8,9,13,19-tetraol. Although the order of the hydroxylations is unclear, at least C8, C9 and C13 of the cycloaraneosene skeleton are hydroxylated before the sordaricin formation. Dehydration of the 13-hydroxy group of the hydroxylated cycloaraneosene derivative might be catalyzed by an unassigned hypothetical protein such as sdnG and sdnP to construct the cyclopentadiene moiety. The FAD-dependent oxidoreductase sdnN is proposed to catalyze the oxidation at C9 of the hydroxylated cycloaraneosene derivative and also catalyze the Baeyer-Villiger oxidation to give the lactone intermediate. The presumed lactone intermediate would be hydrolyzed to give an acrolein moiety and a carboxylate moiety. Then, [4+2]cycloaddition would occur between the acrolein moiety and the cyclopentadiene moiety to give sordaricin. SdnN might also be involved in the [4+2]cycloaddition after the hypothesized oxidation to accommodate the oxidized product and prompt the [4+2]cycloaddition. GDP-6-deoxy-D-altrose may be biosynthesized from GDP-D-mannose by the putative GDP-mannose-4,6-dehydratase sdnI and the short-chain dehydrogenase sdnK. The glycosyltransferase sdnJ catalyzes the attachment of 6-deoxy-D-altrose onto the 19-hydroxy group of sordaricin to give 4'-O-demethylsordarin. The methyltransferase sdnD would complete the biosynthesis of sordarin. Sordarin can be further modified into hypoxysordarin. The unique acyl chain at the 3'-hydroxy group of hypoxysordarin would be constructed by an iterative type I PKS sdnO and the trans-acting polyketide methyltransferase sdnL. SdnL would be responsible for the introduction of an alpha-methyl group of the polyketide chain. Alternatively, the beta-lactamase-like protein sdnR might be responsible for the cleavage and transfer of the polyketide chain from the PKS sdnO to sordarin. Two putative cytochrome P450 monooxygenases, sdnQ and sdnT, might catalyze the epoxidations of the polyketide chain to complete the biosynthesis of hypoxysordarin. Transcriptional regulators sdnM and sdnS are presumably encoded for the transcriptional regulation of the expression of the sdn gene cluster. The protein is Cytochrome P450 monooxygenase sdnF of Sordaria araneosa (Pleurage araneosa).